The chain runs to 728 residues: MSDRIDRDVINALIAGHFADPFSVLGMHKTTAGLEVRALLPDATDVWVIEPKTGRKLAKLECLDSRGFFSGVIPRRKNFFRYQLAVVWHGQQNLIDDPYRFGPLIQEMDAWLLSEGTHLRPYETLGAHADTMDGVTGTRFSVWAPNARRVSVVGQFNYWDGRRHPMRLRKESGIWELFIPGAHNGQLYKYEMIDANGNLRLKSDPYAFEAQMRPETASLICGLPEKVVQTEERKKANQFDAPISIYEVHLGSWRRHTDNNFWLSYRELADQLVPYAKWMGFTHLELLPINEHPFDGSWGYQPTGLYAPTRRFGTRDDFRYFIDAAHAAGLNVILDWVPGHFPTDDFALAEFDGTNLYEHSDPREGYHQDWNTLIYNYGRREVSNFLVGNALYWIERFGIDALRVDAVASMIYRDYSRKEGEWIPNEFGGRENLEAIEFLRNTNRILGEQVSGAVTMAEESTDFPGVSRPQDMGGLGFWYKWNLGWMHDTLDYMKLDPIYRQYHHDKLTFGMLYNNTENFVLPLSHDEVVHGKKSILDRMPGDAWQKFANLRAYYGWMWAFPGKKLLFMGNEFAQGREWNHDASLDWHLLEGGDNWHHGVQRLVRDLNLTYRHHKAMHELDFDPYGFEWLVVDDKERSVLIFVRRDKEGNEIIVASNFTPVPRHDYRFGINQPGKWREILNTDSMHYHGSNAGNGGTVHSDEIASHGRQHSLSLTLPPLATIWLVREAE.

The active-site Nucleophile is the Asp-405. Glu-458 functions as the Proton donor in the catalytic mechanism.

The protein belongs to the glycosyl hydrolase 13 family. GlgB subfamily. In terms of assembly, monomer.

The catalysed reaction is Transfers a segment of a (1-&gt;4)-alpha-D-glucan chain to a primary hydroxy group in a similar glucan chain.. It participates in glycan biosynthesis; glycogen biosynthesis. In terms of biological role, catalyzes the formation of the alpha-1,6-glucosidic linkages in glycogen by scission of a 1,4-alpha-linked oligosaccharide from growing alpha-1,4-glucan chains and the subsequent attachment of the oligosaccharide to the alpha-1,6 position. The protein is 1,4-alpha-glucan branching enzyme GlgB of Shigella dysenteriae serotype 1 (strain Sd197).